We begin with the raw amino-acid sequence, 374 residues long: Queuine tRNA-ribosyltransferase (374 aa).

Residue Asp89 is the Proton acceptor of the active site. Residues 89–93, Asp143, Gln187, and Gly214 each bind substrate; that span reads DSGGF. Positions 245–251 are RNA binding; the sequence is GVGKPED. Asp264 (nucleophile) is an active-site residue. The segment at 269 to 273 is RNA binding; important for wobble base 34 recognition; sequence TRNAR. The Zn(2+) site is built by Cys302, Cys304, Cys307, and His333.

It belongs to the queuine tRNA-ribosyltransferase family. Homodimer. Within each dimer, one monomer is responsible for RNA recognition and catalysis, while the other monomer binds to the replacement base PreQ1. Zn(2+) is required as a cofactor.

The catalysed reaction is 7-aminomethyl-7-carbaguanine + guanosine(34) in tRNA = 7-aminomethyl-7-carbaguanosine(34) in tRNA + guanine. It functions in the pathway tRNA modification; tRNA-queuosine biosynthesis. Its function is as follows. Catalyzes the base-exchange of a guanine (G) residue with the queuine precursor 7-aminomethyl-7-deazaguanine (PreQ1) at position 34 (anticodon wobble position) in tRNAs with GU(N) anticodons (tRNA-Asp, -Asn, -His and -Tyr). Catalysis occurs through a double-displacement mechanism. The nucleophile active site attacks the C1' of nucleotide 34 to detach the guanine base from the RNA, forming a covalent enzyme-RNA intermediate. The proton acceptor active site deprotonates the incoming PreQ1, allowing a nucleophilic attack on the C1' of the ribose to form the product. After dissociation, two additional enzymatic reactions on the tRNA convert PreQ1 to queuine (Q), resulting in the hypermodified nucleoside queuosine (7-(((4,5-cis-dihydroxy-2-cyclopenten-1-yl)amino)methyl)-7-deazaguanosine). This Photorhabdus laumondii subsp. laumondii (strain DSM 15139 / CIP 105565 / TT01) (Photorhabdus luminescens subsp. laumondii) protein is Queuine tRNA-ribosyltransferase.